We begin with the raw amino-acid sequence, 167 residues long: Translationally-controlled tumor protein homolog (167 aa).

The TCTP domain occupies methionine 1–isoleucine 167. Phosphoserine occurs at positions 9 and 15.

This sequence belongs to the TCTP family. In terms of assembly, interacts with the 40S and 60S ribosomal subunits. Interacts with microtubules.

Its subcellular location is the cytoplasm. It localises to the cytoskeleton. The protein localises to the mitochondrion. Functionally, involved in protein synthesis. Involved in microtubule stabilization. The sequence is that of Translationally-controlled tumor protein homolog (TMA19) from Saccharomyces cerevisiae (strain ATCC 204508 / S288c) (Baker's yeast).